Consider the following 536-residue polypeptide: Caspase recruitment domain-containing protein 9 (536 aa).

Residue Ser-2 is modified to Phosphoserine. 3 residues coordinate Zn(2+): Asp-3, Cys-10, and His-73. The CARD domain occupies Asn-6–Glu-98. A linker region spans residues Pro-99 to Thr-116. Coiled-coil stretches lie at residues Gln-117–Ser-277 and Ser-303–Met-420. A Glycyl lysine isopeptide (Lys-Gly) (interchain with G-Cter in ubiquitin) cross-link involves residue Lys-125. Position 231 is a phosphothreonine (Thr-231). Ser-277 bears the Phosphoserine mark. A phosphoserine mark is found at Ser-424, Ser-425, Ser-431, Ser-451, Ser-461, Ser-483, and Ser-498. The disordered stretch occupies residues Ser-425–Ser-451. The interval Lys-472–Ser-536 is disordered. Positions Pro-487 to Tyr-502 are enriched in basic and acidic residues. A phosphothreonine; by CK2 mark is found at Thr-531 and Thr-533.

In terms of assembly, monomer. Homodimer; homodimerization is mediated by the CARD domain which forms an extensive interaction with the adjacent linker and coiled-coil regions; leads to an autoinhibited state. Homomultimer; polymerizes following activation, forming a nucleating helical template that seeds BCL10-filament formation via a CARD-CARD interaction. Interacts (via CARD domain) with BCL10 (via CARD domain); interaction takes place following CARD9 activation and polymerization, leading to the formation of a filamentous CBM complex assembly. Component of a CBM complex (CARD9-BCL10, MALT1), composed of CARD9, BCL10 and MALT1. Interacts with RASGRF1. Interacts with NOD2 (via NACHT domain); interaction is direct. Interacts with RIPK2. Interacts with VHL; without leading to protein degradation. Post-translationally, phosphorylated at Thr-231 by PRKCD downstream of C-type lectin receptors activation: phosphorylation promotes interaction with BCL10, followed by activation of NF-kappa-B and MAP kinase p38 pathways. Phosphorylated at Thr-531 and Thr-533 by CK2 following interaction with VHL, leading to inhibit the ability to activate NF-kappa-B. Ubiquitinated at Lys-125 via 'Lys-27'-linked ubiquitin by TRIM62 downstream of C-type lectin receptors activation; leading to CARD9 activation, followed by activation of NF-kappa-B and MAP kinase p38 pathways. Deubiquitinated at Lys-125 by USP15, inhibiting CARD9.

It localises to the cytoplasm. With respect to regulation, maintained in an autoinhibited state via homodimerization in which the CARD domain forms an extensive interaction with the adjacent linker and coiled-coil regions. Activation downstream of C-type lectin receptors, by phosphorylation by PRKCD and/or ubiquitination by TRIM62, triggers disruption of the CARD domain-coiled coil interface, CARD9 homooligomerization and BCL10 recruitment, followed by activation of NF-kappa-B and MAP kinase p38 pathways. Zinc-binding inhibits activation by stabilizing the CARD ground-state conformation and restricting its capacity to form BCL10-nucleating filaments. Adapter protein that plays a key role in innate immune response against fungi by forming signaling complexes downstream of C-type lectin receptors. CARD9-mediated signals are essential for antifungal immunity against a subset of fungi from the phylum Ascomycota. Transduces signals in myeloid cells downstream of C-type lectin receptors CLEC7A (dectin-1), CLEC6A (dectin-2) and CLEC4E (Mincle), which detect pathogen-associated molecular pattern metabolites (PAMPs), such as fungal carbohydrates, and trigger CARD9 activation. Upon activation, CARD9 homooligomerizes to form a nucleating helical template that recruits BCL10 via CARD-CARD interaction, thereby promoting polymerization of BCL10 and subsequent recruitment of MALT1: this leads to activation of NF-kappa-B and MAP kinase p38 (MAPK11, MAPK12, MAPK13 and/or MAPK14) pathways which stimulate expression of genes encoding pro-inflammatory cytokines and chemokines. CARD9 signaling in antigen-presenting cells links innate sensing of fungi to the activation of adaptive immunity and provides a cytokine milieu that induces the development and subsequent of interleukin 17-producing T helper (Th17) cells. Also involved in activation of myeloid cells via classical ITAM-associated receptors and TLR: required for TLR-mediated activation of MAPK, while it is not required for TLR-induced activation of NF-kappa-B. CARD9 can also be engaged independently of BCL10: forms a complex with RASGRF1 downstream of C-type lectin receptors, which recruits and activates HRAS, leading to ERK activation and the production of cytokines. Acts as an important regulator of the intestinal commensal fungi (mycobiota) component of the gut microbiota. Plays an essential role in antifungal immunity against dissemination of gut fungi: acts by promoting induction of antifungal IgG antibodies response in CX3CR1(+) macrophages to confer protection against disseminated C.albicans or C.auris infection. Also mediates immunity against other pathogens, such as certain bacteria, viruses and parasites; CARD9 signaling is however redundant with other innate immune responses. In response to L.monocytogenes infection, required for the production of inflammatory cytokines activated by intracellular peptidoglycan: acts by connecting NOD2 recognition of peptidoglycan to downstream activation of MAP kinases (MAPK) without activating NF-kappa-B. This is Caspase recruitment domain-containing protein 9 from Rattus norvegicus (Rat).